Here is a 275-residue protein sequence, read N- to C-terminus: NH(3)-dependent NAD(+) synthetase (275 aa).

Residue 46–53 (GISGGQDS) coordinates ATP. Aspartate 52 is a binding site for Mg(2+). Residue arginine 140 participates in deamido-NAD(+) binding. Threonine 160 is an ATP binding site. Glutamate 165 provides a ligand contact to Mg(2+). Deamido-NAD(+) is bound by residues lysine 173 and aspartate 180. The ATP site is built by lysine 189 and threonine 211. A deamido-NAD(+)-binding site is contributed by 260–261 (HK).

Belongs to the NAD synthetase family. In terms of assembly, homodimer.

It carries out the reaction deamido-NAD(+) + NH4(+) + ATP = AMP + diphosphate + NAD(+) + H(+). It functions in the pathway cofactor biosynthesis; NAD(+) biosynthesis; NAD(+) from deamido-NAD(+) (ammonia route): step 1/1. In terms of biological role, catalyzes the ATP-dependent amidation of deamido-NAD to form NAD. Uses ammonia as a nitrogen source. The polypeptide is NH(3)-dependent NAD(+) synthetase (Salmonella typhi).